Reading from the N-terminus, the 345-residue chain is Magnesium-chelatase 38 kDa subunit (345 aa).

35–42 (GDRGTGKS) contacts ATP.

This sequence belongs to the Mg-chelatase subunits D/I family.

It catalyses the reaction protoporphyrin IX + Mg(2+) + ATP + H2O = Mg-protoporphyrin IX + ADP + phosphate + 3 H(+). It participates in porphyrin-containing compound metabolism; bacteriochlorophyll biosynthesis. In terms of biological role, involved in bacteriochlorophyll biosynthesis; introduces a magnesium ion into protoporphyrin IX to yield Mg-protoporphyrin IX. This chain is Magnesium-chelatase 38 kDa subunit (bchI), found in Acidiphilium rubrum.